The sequence spans 322 residues: uncharacterized protein (322 aa).

2 stretches are compositionally biased toward basic residues: residues 1–16 and 43–61; these read MPGN…KSGT and LRPH…RRPV. Residues 1 to 69 are disordered; that stretch reads MPGNSRRRGA…PVKRADETET (69 aa). Residues Gly261, Ile281, and Leu290 each coordinate S-adenosyl-L-methionine.

It belongs to the class IV-like SAM-binding methyltransferase superfamily. RNA methyltransferase TrmH family.

This is an uncharacterized protein from Mycobacterium bovis (strain ATCC BAA-935 / AF2122/97).